The primary structure comprises 673 residues: UvrABC system protein B (673 aa).

Positions 26–183 (ANFEAGLAKQ…RHLTDLQYTR (158 aa)) constitute a Helicase ATP-binding domain. 39–46 (GVTGSGKT) lines the ATP pocket. Positions 92–115 (YYDYYQPEAYVPSSDTFIEKDSSI) match the Beta-hairpin motif. Residues 431 to 597 (QVDDLMSEIH…SVERPISDIM (167 aa)) form the Helicase C-terminal domain. The disordered stretch occupies residues 601–631 (REDAAEKKSGKGRSKSRQVAEETPDYRAMKP). A compositionally biased stretch (basic and acidic residues) spans 618-630 (QVAEETPDYRAMK). A UVR domain is found at 635–670 (AGKLKSLEQKMYQHAKDLEFEAAAQIRDQIQKLKTA).

It belongs to the UvrB family. Forms a heterotetramer with UvrA during the search for lesions. Interacts with UvrC in an incision complex.

Its subcellular location is the cytoplasm. Its function is as follows. The UvrABC repair system catalyzes the recognition and processing of DNA lesions. A damage recognition complex composed of 2 UvrA and 2 UvrB subunits scans DNA for abnormalities. Upon binding of the UvrA(2)B(2) complex to a putative damaged site, the DNA wraps around one UvrB monomer. DNA wrap is dependent on ATP binding by UvrB and probably causes local melting of the DNA helix, facilitating insertion of UvrB beta-hairpin between the DNA strands. Then UvrB probes one DNA strand for the presence of a lesion. If a lesion is found the UvrA subunits dissociate and the UvrB-DNA preincision complex is formed. This complex is subsequently bound by UvrC and the second UvrB is released. If no lesion is found, the DNA wraps around the other UvrB subunit that will check the other stand for damage. This Xanthomonas oryzae pv. oryzae (strain MAFF 311018) protein is UvrABC system protein B.